Consider the following 86-residue polypeptide: Small ribosomal subunit protein bS20 (86 aa).

It belongs to the bacterial ribosomal protein bS20 family.

In terms of biological role, binds directly to 16S ribosomal RNA. The chain is Small ribosomal subunit protein bS20 from Bifidobacterium adolescentis (strain ATCC 15703 / DSM 20083 / NCTC 11814 / E194a).